We begin with the raw amino-acid sequence, 152 residues long: Cytochrome c-type biogenesis protein CcmE 2 (152 aa).

The Cytoplasmic segment spans residues 1–8; that stretch reads MNPQRRRR. A helical; Signal-anchor for type II membrane protein transmembrane segment spans residues 9–29; the sequence is LWLVLALVLAGGLATTLVAMA. Topologically, residues 30 to 152 are periplasmic; it reads LQRNVAYLYT…HQVAPAKVTQ (123 aa). 2 residues coordinate heme: His-123 and Tyr-127.

Belongs to the CcmE/CycJ family.

It localises to the cell inner membrane. In terms of biological role, heme chaperone required for the biogenesis of c-type cytochromes. Transiently binds heme delivered by CcmC and transfers the heme to apo-cytochromes in a process facilitated by CcmF and CcmH. In Xanthomonas campestris pv. campestris (strain 8004), this protein is Cytochrome c-type biogenesis protein CcmE 2.